An 824-amino-acid chain; its full sequence is Ent-copalyl diphosphate synthase AN1, chloroplastic (824 aa).

Residues 1–63 constitute a chloroplast transit peptide; it reads MPYPHPYPWQ…SSAKVFQTSR (63 aa). Positions 1–87 are disordered; the sequence is MPYPHPYPWQ…QDLEDEHQAE (87 aa). Over residues 44 to 63 the composition is skewed to polar residues; sequence ATTTQQPDNVSSAKVFQTSR. Position 247 (lysine 247) interacts with substrate. Aspartate 379 and aspartate 381 together coordinate Mg(2+). The DXDD motif signature appears at 379-382; sequence DVDD. A substrate-binding site is contributed by lysine 465.

The protein belongs to the terpene synthase family. Tpsc subfamily. It depends on Mg(2+) as a cofactor.

The protein resides in the plastid. It localises to the chloroplast. The catalysed reaction is (2E,6E,10E)-geranylgeranyl diphosphate = ent-copalyl diphosphate. Its pathway is plant hormone biosynthesis; gibberellin biosynthesis. Functionally, involved in giberellin biosynthesis. Catalyzes the conversion of geranylgeranyl diphosphate to the gibberellin precursor ent-copalyl diphosphate. The polypeptide is Ent-copalyl diphosphate synthase AN1, chloroplastic (Zea mays (Maize)).